A 117-amino-acid polypeptide reads, in one-letter code: Small ribosomal subunit protein bS6 (117 aa).

Residues 96–117 (KEAAAPAPKAAPVESAPAVEAE) are disordered. The segment covering 99–117 (AAPAPKAAPVESAPAVEAE) has biased composition (low complexity).

This sequence belongs to the bacterial ribosomal protein bS6 family.

Binds together with bS18 to 16S ribosomal RNA. The sequence is that of Small ribosomal subunit protein bS6 from Geobacter sulfurreducens (strain ATCC 51573 / DSM 12127 / PCA).